Here is a 216-residue protein sequence, read N- to C-terminus: Probable nicotinate-nucleotide adenylyltransferase (216 aa).

It belongs to the NadD family.

It catalyses the reaction nicotinate beta-D-ribonucleotide + ATP + H(+) = deamido-NAD(+) + diphosphate. The protein operates within cofactor biosynthesis; NAD(+) biosynthesis; deamido-NAD(+) from nicotinate D-ribonucleotide: step 1/1. Catalyzes the reversible adenylation of nicotinate mononucleotide (NaMN) to nicotinic acid adenine dinucleotide (NaAD). The sequence is that of Probable nicotinate-nucleotide adenylyltransferase from Geobacter sulfurreducens (strain ATCC 51573 / DSM 12127 / PCA).